The following is a 226-amino-acid chain: Thiocyanate methyltransferase 1 (226 aa).

W35, W39, W46, and G73 together coordinate S-adenosyl-L-methionine. S85 is modified (phosphoserine). S-adenosyl-L-methionine-binding positions include D94, 122–123 (DF), and Y138.

It belongs to the class I-like SAM-binding methyltransferase superfamily. TPMT family. In terms of tissue distribution, ubiquitous.

It catalyses the reaction thiocyanate + S-adenosyl-L-methionine = methyl thiocyanate + S-adenosyl-L-homocysteine. S-adenosyl-L-methionine-dependent methyltransferase. Probably involved in glucosinolate metabolism and defense against phytopathogens. Highly reactive to thiocyanate (NCS(-)) derived from myrosinase-mediated hydrolysis of glucosinolates upon tissue damage. Also accepts halid ions as substrates with a lower affinity. This is Thiocyanate methyltransferase 1 (TMT1) from Brassica oleracea (Wild cabbage).